Here is a 289-residue protein sequence, read N- to C-terminus: Protease HtpX homolog (289 aa).

The next 2 membrane-spanning stretches (helical) occupy residues 7–26 (TAAL…YWVI) and 31–48 (GLII…FSWY). Zn(2+) is bound at residue His132. Glu133 is an active-site residue. His136 provides a ligand contact to Zn(2+). 2 helical membrane passes run 151-171 (VAGA…FGGG) and 182-202 (LGVL…QLAI). Glu207 is a binding site for Zn(2+).

It belongs to the peptidase M48B family. Zn(2+) is required as a cofactor.

It is found in the cell inner membrane. The polypeptide is Protease HtpX homolog (Nostoc punctiforme (strain ATCC 29133 / PCC 73102)).